The primary structure comprises 625 residues: DNA mismatch repair protein MutL (625 aa).

The segment at 404-427 (PPPRNAPQSTGMPSMAGTGLPATS) is disordered.

The protein belongs to the DNA mismatch repair MutL/HexB family.

Its function is as follows. This protein is involved in the repair of mismatches in DNA. It is required for dam-dependent methyl-directed DNA mismatch repair. May act as a 'molecular matchmaker', a protein that promotes the formation of a stable complex between two or more DNA-binding proteins in an ATP-dependent manner without itself being part of a final effector complex. This Xanthomonas oryzae pv. oryzae (strain MAFF 311018) protein is DNA mismatch repair protein MutL.